The sequence spans 107 residues: Proteinase inhibitor I-B (107 aa).

The first 22 residues, 1–22 (MVKFAHVVAFLLLASLFQPLTA), serve as a signal peptide directing secretion. Residues 23–39 (RDLEINVLQLDVSQSGC) constitute a propeptide that is removed on maturation.

Belongs to the protease inhibitor I13 (potato type I serine protease inhibitor) family.

It localises to the secreted. This Nicotiana tabacum (Common tobacco) protein is Proteinase inhibitor I-B (TIMPA).